The sequence spans 328 residues: Flotillin-like protein FloA (328 aa).

2 consecutive transmembrane segments (helical) span residues 1–21 and 26–46; these read MFGL…LVLF and VGLW…TLVG.

Belongs to the flotillin-like FloA family. As to quaternary structure, homooligomerizes.

The protein resides in the cell membrane. The protein localises to the membrane raft. Functionally, found in functional membrane microdomains (FMM) that may be equivalent to eukaryotic membrane rafts. FMMs are highly dynamic and increase in number as cells age. Flotillins are thought to be important factors in membrane fluidity. The chain is Flotillin-like protein FloA from Staphylococcus haemolyticus (strain JCSC1435).